A 292-amino-acid chain; its full sequence is Histamine N-methyltransferase (292 aa).

E28 lines the substrate pocket. Positions 60, 89, 94, 120, and 142 each coordinate S-adenosyl-L-methionine. N283 is a binding site for substrate.

The protein belongs to the class I-like SAM-binding methyltransferase superfamily. HNMT family. As to quaternary structure, monomer. Expressed in jejunum, brain &gt; lung, spleen, stomach &gt; liver, kidney.

The protein resides in the cytoplasm. The catalysed reaction is histamine + S-adenosyl-L-methionine = N(tau)-methylhistamine + S-adenosyl-L-homocysteine + H(+). Its function is as follows. Inactivates histamine by N-methylation. Plays an important role in degrading histamine and in regulating the airway response to histamine. The sequence is that of Histamine N-methyltransferase (HNMT) from Cavia porcellus (Guinea pig).